The chain runs to 359 residues: Phosphate acyltransferase (359 aa).

This sequence belongs to the PlsX family. Homodimer. Probably interacts with PlsY.

Its subcellular location is the cytoplasm. The catalysed reaction is a fatty acyl-[ACP] + phosphate = an acyl phosphate + holo-[ACP]. It participates in lipid metabolism; phospholipid metabolism. Functionally, catalyzes the reversible formation of acyl-phosphate (acyl-PO(4)) from acyl-[acyl-carrier-protein] (acyl-ACP). This enzyme utilizes acyl-ACP as fatty acyl donor, but not acyl-CoA. The sequence is that of Phosphate acyltransferase from Citrobacter koseri (strain ATCC BAA-895 / CDC 4225-83 / SGSC4696).